The following is a 253-amino-acid chain: 3-deoxy-manno-octulosonate cytidylyltransferase (253 aa).

This sequence belongs to the KdsB family.

The protein resides in the cytoplasm. The catalysed reaction is 3-deoxy-alpha-D-manno-oct-2-ulosonate + CTP = CMP-3-deoxy-beta-D-manno-octulosonate + diphosphate. It functions in the pathway nucleotide-sugar biosynthesis; CMP-3-deoxy-D-manno-octulosonate biosynthesis; CMP-3-deoxy-D-manno-octulosonate from 3-deoxy-D-manno-octulosonate and CTP: step 1/1. The protein operates within bacterial outer membrane biogenesis; lipopolysaccharide biosynthesis. Activates KDO (a required 8-carbon sugar) for incorporation into bacterial lipopolysaccharide in Gram-negative bacteria. This Geotalea daltonii (strain DSM 22248 / JCM 15807 / FRC-32) (Geobacter daltonii) protein is 3-deoxy-manno-octulosonate cytidylyltransferase.